The primary structure comprises 92 residues: Large ribosomal subunit protein eL43 (92 aa).

The C4-type zinc-finger motif lies at 39 to 60 (CEFCGKFAVKRKAVGIWGCKDC).

This sequence belongs to the eukaryotic ribosomal protein eL43 family.

The chain is Large ribosomal subunit protein eL43 (RPL37A) from Pseudotsuga menziesii (Douglas-fir).